Reading from the N-terminus, the 91-residue chain is Potassium channel toxin BmTXK-beta-2 (91 aa).

The first 19 residues, 1–19 (MQRNLVVLLFLGMVALSSC), serve as a signal peptide directing secretion. The propeptide occupies 20–27 (GLREKHFQ). Positions 54–91 (QFGCPAYQGYCDDHCQDIKKEEGFCHGFKCKCGIPMGF) constitute a BetaSPN-type CS-alpha/beta domain. 3 disulfides stabilise this stretch: Cys-57-Cys-78, Cys-64-Cys-83, and Cys-68-Cys-85.

The protein belongs to the long chain scorpion toxin family. Class 1 subfamily. In terms of tissue distribution, expressed by the venom gland.

Its subcellular location is the secreted. Inhibits voltage-gated potassium channel. This is Potassium channel toxin BmTXK-beta-2 from Olivierus martensii (Manchurian scorpion).